Consider the following 422-residue polypeptide: Zinc-regulated transporter 2 (422 aa).

Topologically, residues 1–27 (MVDLIARDDSVDTCQASNGYNGHAGLR) are extracellular. A helical membrane pass occupies residues 28-48 (ILAVFIILISSGLGVYFPILS). The Cytoplasmic portion of the chain corresponds to 49 to 60 (SRYSFIRLPNWC). The chain crosses the membrane as a helical span at residues 61 to 81 (FFIAKFFGSGVIVATAFVHLL). The Extracellular portion of the chain corresponds to 82-99 (QPAAEALGDECLGGTFAE). The helical transmembrane segment at 100–120 (YPWAFGICLMSLFLLFFTEII) threads the bilayer. Topologically, residues 121-262 (THYFVAKTLG…EEDKEQYLNQ (142 aa)) are cytoplasmic. 4 positions are modified to phosphoserine: S148, S149, S162, and S170. A Phosphothreonine modification is found at T188. Residues 263-283 (ILAVFILEFGIIFHSVFVGLS) traverse the membrane as a helical segment. Over 284–290 (LSVAGEE) the chain is Extracellular. Residues 291 to 311 (FETLFIVLTFHQMFEGLGLGT) form a helical membrane-spanning segment. Over 312-326 (RVAETNWPESKKYMP) the chain is Cytoplasmic. The chain crosses the membrane as a helical span at residues 327 to 347 (WLMGLAFTLTSPIAVAVGIGV). Topologically, residues 348 to 358 (RHSWIPGSRRA) are extracellular. A helical transmembrane segment spans residues 359–379 (LIANGVFDSISSGILIYTGLV). Residues 380–400 (ELMAHEFLYSNQFKGPDGLKK) lie on the Cytoplasmic side of the membrane. The chain crosses the membrane as a helical span at residues 401–421 (MLSAYLIMCCGAALMALLGKW). A422 is a topological domain (extracellular).

Belongs to the ZIP transporter (TC 2.A.5) family.

It localises to the membrane. Its function is as follows. Low-affinity zinc transport protein. Active in zinc-replete cells and is time-, temperature- and concentration-dependent and prefers zinc over other metals as its substrate. This chain is Zinc-regulated transporter 2 (ZRT2), found in Saccharomyces cerevisiae (strain ATCC 204508 / S288c) (Baker's yeast).